A 611-amino-acid polypeptide reads, in one-letter code: Actin-interacting protein 1 (611 aa).

WD repeat units follow at residues 57-96, 145-185, 188-227, 237-276, 322-361, 446-485, 489-528, 534-573, and 579-610; these read EHSH…HILK, GQAR…FKST, EHTK…KTGV, AHSG…VEKT, GHNK…SNRV, PISY…VSEV, VHPA…ELAH, FHTA…DHPI, and HAMS…WNVP.

The protein belongs to the WD repeat AIP1 family.

The protein resides in the cytoplasm. Its subcellular location is the cytoskeleton. Induces disassembly of actin filaments in conjunction with ADF/cofilin family proteins. Regulator of actin organization in myofibrils. This chain is Actin-interacting protein 1 (unc-78), found in Caenorhabditis elegans.